Consider the following 253-residue polypeptide: ABC transporter D-alanine-binding periplasmic protein (253 aa).

The signal sequence occupies residues 1-22 (MLSKKFGLSMIVLGIMSSSAFA). D-alanine is bound by residues G95, S97, R102, A147, and E191.

It belongs to the bacterial solute-binding protein 3 family. In terms of assembly, monomer.

The protein resides in the periplasm. Part of the ABC transporter complex dalSTUV, that imports D-alanine into the cytoplasm. Helps protect the organism from oxidative killing by host neutrophils through sequestration of D-alanine, a substrate that is converted to hydrogen peroxide by the host enzyme DAO (D-amino acid oxidase). DalS shuttles D-alanine from the periplasm to the DalTUV complex situated in the inner membrane and through hydrolysis of ATP, D-alanine is transported across the membrane into the cytoplasm. Not required for the metabolism of D-alanine found in the stem peptide of peptidoglycan. This is ABC transporter D-alanine-binding periplasmic protein from Salmonella typhimurium (strain LT2 / SGSC1412 / ATCC 700720).